An 87-amino-acid chain; its full sequence is U3-theraphotoxin-Hhn1a 8 (87 aa).

An N-terminal signal peptide occupies residues 1-24; that stretch reads MVNMKASMFLTFAGLVLLFVVCYA. A propeptide spanning residues 25–52 is cleaved from the precursor; that stretch reads SGSEEKEFPKEMLSSIFAVDNDFKQEER. 3 disulfide bridges follow: Cys-54-Cys-67, Cys-61-Cys-72, and Cys-66-Cys-79.

Belongs to the neurotoxin 10 (Hwtx-1) family. 51 (Hntx-8) subfamily. Hntx-8 sub-subfamily. In terms of tissue distribution, expressed by the venom gland.

The protein resides in the secreted. In terms of biological role, ion channel inhibitor. The polypeptide is U3-theraphotoxin-Hhn1a 8 (Cyriopagopus hainanus (Chinese bird spider)).